We begin with the raw amino-acid sequence, 191 residues long: Fe/S biogenesis protein NfuA (191 aa).

The [4Fe-4S] cluster site is built by Cys-149 and Cys-152.

Belongs to the NfuA family. Homodimer. Requires [4Fe-4S] cluster as cofactor.

Its function is as follows. Involved in iron-sulfur cluster biogenesis. Binds a 4Fe-4S cluster, can transfer this cluster to apoproteins, and thereby intervenes in the maturation of Fe/S proteins. Could also act as a scaffold/chaperone for damaged Fe/S proteins. This chain is Fe/S biogenesis protein NfuA, found in Photorhabdus laumondii subsp. laumondii (strain DSM 15139 / CIP 105565 / TT01) (Photorhabdus luminescens subsp. laumondii).